We begin with the raw amino-acid sequence, 477 residues long: MAAKATGVVGKVRQVIGAVVDVQFGDHLPAILNALETTNVGNRLVLEVAQHLGENTVRCIAMDSTEGLVRGQEVRDTGAPITVPVGPGMLGRIINVIGEPVDEEGPVDAIEMRSIHQPAPTYVEQSTEAQILITGIKVLDLLAPYAKGGKIGLFGGAGVGKTVLIQELINNIAKAHGGYSVFAGVGERTREGNDLYHEFIESGVNKKGGGEGSKAALVYGQMNEPPGARARVGLTGLTVAEYFRDQGQDVLFFVDNIFRFTQAGSEVSALLGRIPSAVGYQPTLATDMGALQERITTTTKGSITSVQAIYVPADDLTDPAPATSFAHLDATTTLNRAIAEKGIYPAVDPLDSTSRMLDPMVVGEEHYAVARQVQSILQRYKSLQDIIAILGMDELSEEDKQTVARARKIERFLSQPFFVAEVFTGAPGKLVDLADTIKGFKGLCNGDYDHLPEAAFYMVGGIEEAVEKAQRLAAEAA.

155 to 162 (GGAGVGKT) is an ATP binding site.

It belongs to the ATPase alpha/beta chains family. F-type ATPases have 2 components, CF(1) - the catalytic core - and CF(0) - the membrane proton channel. CF(1) has five subunits: alpha(3), beta(3), gamma(1), delta(1), epsilon(1). CF(0) has three main subunits: a(1), b(2) and c(9-12). The alpha and beta chains form an alternating ring which encloses part of the gamma chain. CF(1) is attached to CF(0) by a central stalk formed by the gamma and epsilon chains, while a peripheral stalk is formed by the delta and b chains.

It localises to the cell inner membrane. The enzyme catalyses ATP + H2O + 4 H(+)(in) = ADP + phosphate + 5 H(+)(out). Functionally, produces ATP from ADP in the presence of a proton gradient across the membrane. The catalytic sites are hosted primarily by the beta subunits. The sequence is that of ATP synthase subunit beta from Mesorhizobium japonicum (strain LMG 29417 / CECT 9101 / MAFF 303099) (Mesorhizobium loti (strain MAFF 303099)).